Consider the following 378-residue polypeptide: Mitogen-activated protein kinase mpkC (378 aa).

The region spanning 20–300 (YVNPQPIGMG…AQDALRYPYL (281 aa)) is the Protein kinase domain. ATP-binding positions include 26–34 (IGMGSFGLV) and lysine 49. The active-site Proton acceptor is aspartate 141. At threonine 171 the chain carries Phosphothreonine. The short motif at 171–173 (TGY) is the TXY element. Residue tyrosine 173 is modified to Phosphotyrosine.

It belongs to the protein kinase superfamily. Ser/Thr protein kinase family. MAP kinase subfamily. HOG1 sub-subfamily. Interacts with sakA upon osmotic and cell wall stresses. The cofactor is Mg(2+). Post-translationally, dually phosphorylated on Thr-171 and Tyr-173, which activates the enzyme.

The protein resides in the cytoplasm. It is found in the nucleus. It carries out the reaction L-seryl-[protein] + ATP = O-phospho-L-seryl-[protein] + ADP + H(+). The enzyme catalyses L-threonyl-[protein] + ATP = O-phospho-L-threonyl-[protein] + ADP + H(+). With respect to regulation, activated by tyrosine and threonine phosphorylation. Functionally, mitogen-activated protein kinase; part of an osmotic and general signal pathways involved in regulation of the response to the cell wall damage, oxidative stress, drug resistance, and establishment of infection. Required for growth on media where sorbitol or mannitol is the sole carbon source. With sakA, plays a redundant or cooperative role in the conidial stress resistance. Also plays a supportive role in osmotic stress adaptation when sakA is deficient. Involved in paradoxical growth, the cell wall integrity (CWI) pathway and biofilm formation. Acts by modulating sakA activity upon exposure to several types o stresses and during cell wall biosynthesis. Also collaborates with sakA to allow ful virulence in a neutropenic murine model of invasive pulmonary aspergillosis. MpkC and sakA have both independent and collaborative functions during the transcriptional response to transient osmotic stress, and mpkC plays a major role in the modulation of the response to DNA metabolism while activating mitochondrial functions and cation transport. The chain is Mitogen-activated protein kinase mpkC (mpkC) from Aspergillus fumigatus (strain ATCC MYA-4609 / CBS 101355 / FGSC A1100 / Af293) (Neosartorya fumigata).